A 360-amino-acid polypeptide reads, in one-letter code: Protein NDRG2 (360 aa).

The segment at 325-360 (RTASLSSEGNRSRSRTLSQSSESGGGPPAPLAEVTC) is disordered.

The protein belongs to the NDRG family.

It is found in the cytoplasm. Contributes to the regulation of the Wnt signaling pathway. Down-regulates CTNNB1-mediated transcriptional activation of target genes. May be involved in neuron differentiation. This chain is Protein NDRG2, found in Xenopus tropicalis (Western clawed frog).